Consider the following 295-residue polypeptide: Release factor glutamine methyltransferase (295 aa).

S-adenosyl-L-methionine is bound by residues 127-131 (GTGSG), Asp150, Phe179, and Asn195. 195–198 (NPPY) is a substrate binding site.

It belongs to the protein N5-glutamine methyltransferase family. PrmC subfamily.

It carries out the reaction L-glutaminyl-[peptide chain release factor] + S-adenosyl-L-methionine = N(5)-methyl-L-glutaminyl-[peptide chain release factor] + S-adenosyl-L-homocysteine + H(+). Functionally, methylates the class 1 translation termination release factors RF1/PrfA and RF2/PrfB on the glutamine residue of the universally conserved GGQ motif. This is Release factor glutamine methyltransferase from Nitratidesulfovibrio vulgaris (strain ATCC 29579 / DSM 644 / CCUG 34227 / NCIMB 8303 / VKM B-1760 / Hildenborough) (Desulfovibrio vulgaris).